Reading from the N-terminus, the 208-residue chain is Small ribosomal subunit protein uS2 (208 aa).

The disordered stretch occupies residues 189–208; the sequence is KPDQDLPVPPEEFETRLVQT.

It belongs to the universal ribosomal protein uS2 family.

The protein is Small ribosomal subunit protein uS2 of Pyrobaculum arsenaticum (strain DSM 13514 / JCM 11321 / PZ6).